The primary structure comprises 203 residues: HTH-type transcriptional regulator CymR (203 aa).

The region spanning 13-73 is the HTH tetR-type domain; that stretch reads METQGKLIAA…ATFEWLYEQI (61 aa). The segment at residues 36-55 is a DNA-binding region (H-T-H motif); that stretch reads RIADVPGAAGVSRGAQSHHF.

Functionally, involved in the repression of the cym and cmt operons which are responsible of the p-cymene degradation. The sequence is that of HTH-type transcriptional regulator CymR from Pseudomonas putida (Arthrobacter siderocapsulatus).